Reading from the N-terminus, the 323-residue chain is NADH-ubiquinone oxidoreductase chain 1 (323 aa).

Helical transmembrane passes span 4 to 24, 73 to 93, 106 to 126, 150 to 170, 175 to 195, 226 to 246, 256 to 276, and 303 to 323; these read LFTV…VAFL, YLFF…WNLM, LLLV…SGWA, LALI…TYIM, FSWF…STLA, LFFI…VVIF, LFPL…FLFL, and IGAL…LPLF.

The protein belongs to the complex I subunit 1 family.

The protein localises to the mitochondrion inner membrane. The catalysed reaction is a ubiquinone + NADH + 5 H(+)(in) = a ubiquinol + NAD(+) + 4 H(+)(out). Its function is as follows. Core subunit of the mitochondrial membrane respiratory chain NADH dehydrogenase (Complex I) that is believed to belong to the minimal assembly required for catalysis. Complex I functions in the transfer of electrons from NADH to the respiratory chain. The immediate electron acceptor for the enzyme is believed to be ubiquinone. This is NADH-ubiquinone oxidoreductase chain 1 (ND1) from Paracentrotus lividus (Common sea urchin).